The primary structure comprises 260 residues: Type III pantothenate kinase (260 aa).

Position 6 to 13 (6 to 13 (DVGNTNIT)) interacts with ATP. Position 107 to 110 (107 to 110 (GADR)) interacts with substrate. Catalysis depends on Asp109, which acts as the Proton acceptor. Asp129 lines the K(+) pocket. Thr132 is a binding site for ATP. Residue Thr184 coordinates substrate.

This sequence belongs to the type III pantothenate kinase family. As to quaternary structure, homodimer. The cofactor is NH4(+). It depends on K(+) as a cofactor.

Its subcellular location is the cytoplasm. The enzyme catalyses (R)-pantothenate + ATP = (R)-4'-phosphopantothenate + ADP + H(+). The protein operates within cofactor biosynthesis; coenzyme A biosynthesis; CoA from (R)-pantothenate: step 1/5. Functionally, catalyzes the phosphorylation of pantothenate (Pan), the first step in CoA biosynthesis. The polypeptide is Type III pantothenate kinase (Agathobacter rectalis (strain ATCC 33656 / DSM 3377 / JCM 17463 / KCTC 5835 / VPI 0990) (Eubacterium rectale)).